We begin with the raw amino-acid sequence, 600 residues long: UvrABC system protein C (600 aa).

Residues 15 to 92 (DKPGCYLMKD…IKKYQPYYNV (78 aa)) form the GIY-YIG domain. In terms of domain architecture, UVR spans 197–232 (AQVKQDLTEKMTQASMDLEFERAAEIRDQLKYIEQT).

Belongs to the UvrC family. As to quaternary structure, interacts with UvrB in an incision complex.

Its subcellular location is the cytoplasm. The UvrABC repair system catalyzes the recognition and processing of DNA lesions. UvrC both incises the 5' and 3' sides of the lesion. The N-terminal half is responsible for the 3' incision and the C-terminal half is responsible for the 5' incision. This chain is UvrABC system protein C, found in Lactobacillus johnsonii (strain CNCM I-12250 / La1 / NCC 533).